The chain runs to 965 residues: Meiosis-specific coiled-coil domain-containing protein MEIOC (965 aa).

2 disordered regions span residues 1 to 22 and 946 to 965; these read MEVS…EGPE and VHES…TSKH. The span at 949 to 965 shows a compositional bias: polar residues; that stretch reads SINSSNPMNQRGETSKH.

Interacts with YTHDC2; binds transcripts that regulate the mitotic cell cycle inhibiting progression into metaphase, thereby allowing meiotic prophase to proceed normally. Interacts with RBM46. Expressed specifically in fetal ovary and postnatal and adult testes (at protein level). In adult testis expressed in spermatocytes, beginning in preleptotene and extending through most stages of meiotic prophase I, including leptotene, zygotene, and pachytene.

It is found in the cytoplasm. The protein localises to the nucleus. Is required for meiosis completion in both male and female germ cells. Confers stability to numerous meiotic mRNAs in gonads allowing proper initiation and progression into meiosis prophase I. The function may involve YTHDC2 and is independent of induction by retinoic acid (RA). Maintains an extended meiotic prophase I by properly promoting the transition from a mitotic to a meiotic cell cycle program by binding transcripts through its interaction with YTHDC2 that regulate the mitotic cell cycle. This chain is Meiosis-specific coiled-coil domain-containing protein MEIOC, found in Mus musculus (Mouse).